Here is a 159-residue protein sequence, read N- to C-terminus: Ribosomal RNA large subunit methyltransferase H (159 aa).

S-adenosyl-L-methionine-binding positions include Leu-76, Gly-108, and 127–132 (FGRLTL).

It belongs to the RNA methyltransferase RlmH family. Homodimer.

It is found in the cytoplasm. It carries out the reaction pseudouridine(1915) in 23S rRNA + S-adenosyl-L-methionine = N(3)-methylpseudouridine(1915) in 23S rRNA + S-adenosyl-L-homocysteine + H(+). Functionally, specifically methylates the pseudouridine at position 1915 (m3Psi1915) in 23S rRNA. The polypeptide is Ribosomal RNA large subunit methyltransferase H (Streptococcus pneumoniae (strain 70585)).